A 49-amino-acid chain; its full sequence is Large ribosomal subunit protein bL33 (49 aa).

The protein belongs to the bacterial ribosomal protein bL33 family.

In Clostridium acetobutylicum (strain ATCC 824 / DSM 792 / JCM 1419 / IAM 19013 / LMG 5710 / NBRC 13948 / NRRL B-527 / VKM B-1787 / 2291 / W), this protein is Large ribosomal subunit protein bL33.